The sequence spans 257 residues: Imidazole glycerol phosphate synthase subunit hisF1 (257 aa).

Active-site residues include D11 and D130.

The protein belongs to the HisA/HisF family. In terms of assembly, heterodimer of HisH and HisF.

The protein localises to the cytoplasm. It carries out the reaction 5-[(5-phospho-1-deoxy-D-ribulos-1-ylimino)methylamino]-1-(5-phospho-beta-D-ribosyl)imidazole-4-carboxamide + L-glutamine = D-erythro-1-(imidazol-4-yl)glycerol 3-phosphate + 5-amino-1-(5-phospho-beta-D-ribosyl)imidazole-4-carboxamide + L-glutamate + H(+). Its pathway is amino-acid biosynthesis; L-histidine biosynthesis; L-histidine from 5-phospho-alpha-D-ribose 1-diphosphate: step 5/9. IGPS catalyzes the conversion of PRFAR and glutamine to IGP, AICAR and glutamate. The HisF subunit catalyzes the cyclization activity that produces IGP and AICAR from PRFAR using the ammonia provided by the HisH subunit. The polypeptide is Imidazole glycerol phosphate synthase subunit hisF1 (hisF1) (Vibrio vulnificus (strain YJ016)).